We begin with the raw amino-acid sequence, 80 residues long: Defensin coprisin (80 aa).

An N-terminal signal peptide occupies residues 1 to 20 (MAKLIAFALVASLCLSMVLC). Residues 21 to 37 (NPLPEEVQEEGLVRQKR) constitute a propeptide that is removed on maturation. 3 disulfides stabilise this stretch: cysteine 40–cysteine 71, cysteine 57–cysteine 76, and cysteine 61–cysteine 78.

It belongs to the invertebrate defensin family. Type 1 subfamily.

The protein resides in the secreted. It localises to the target cell membrane. In terms of biological role, potent broad-spectrum antibacterial peptide against both Gram-positive (B.subtilis, S.epidermidis, and S.aureus) and Gram-negative bacteria (E.coli, S.typhimurium, and P.aeruginosa). Is also active against all antibiotic-resistant bacterial strains tested. Induces apoptosis in C.albicans, but does not disrupt the fungal plasma membrane at all. Acts by permeabilizing the bacterial cell membrane, but not human membranes. Also shows potent anti-inflammatory activities, since it reduces both LPS-induced nitric oxide release and pro-inflammatory cytokine production. Anti-inflammatory activities are initiated by suppressing the binding of LPS to toll-like receptor 4 (TLR4), and subsequently inhibiting the phosphorylation of p38 mitogen-activated protein kinase (MAPK) and nuclear translocation of NF-kB (TNFRSF11A). Does not show hemolytic activity against human erythrocytes. The protein is Defensin coprisin of Copris tripartitus (Dung beetle).